Consider the following 373-residue polypeptide: GTP cyclohydrolase 1 type 2 homolog (373 aa).

A divalent metal cation contacts are provided by His-68, His-69, Asp-107, His-333, and Glu-336.

The protein belongs to the GTP cyclohydrolase I type 2/NIF3 family. As to quaternary structure, homohexamer.

This Bacillus subtilis (strain 168) protein is GTP cyclohydrolase 1 type 2 homolog (yqfO).